A 502-amino-acid chain; its full sequence is Glycerol kinase (502 aa).

Residue threonine 14 participates in ADP binding. Residues threonine 14, threonine 15, and serine 16 each coordinate ATP. Threonine 14 is a binding site for sn-glycerol 3-phosphate. Arginine 18 serves as a coordination point for ADP. Sn-glycerol 3-phosphate contacts are provided by arginine 84, glutamate 85, tyrosine 136, and aspartate 246. Glycerol contacts are provided by arginine 84, glutamate 85, tyrosine 136, aspartate 246, and glutamine 247. Residues threonine 268 and glycine 311 each contribute to the ADP site. Threonine 268, glycine 311, glutamine 315, and glycine 412 together coordinate ATP. 2 residues coordinate ADP: glycine 412 and asparagine 416.

The protein belongs to the FGGY kinase family. Homotetramer and homodimer (in equilibrium). Heterodimer with EIIA-Glc. Binds 1 zinc ion per glycerol kinase EIIA-Glc dimer. The zinc ion is important for dimerization.

The enzyme catalyses glycerol + ATP = sn-glycerol 3-phosphate + ADP + H(+). It functions in the pathway polyol metabolism; glycerol degradation via glycerol kinase pathway; sn-glycerol 3-phosphate from glycerol: step 1/1. Activity of this regulatory enzyme is affected by several metabolites. Allosterically and non-competitively inhibited by fructose 1,6-bisphosphate (FBP) and unphosphorylated phosphocarrier protein EIIA-Glc (III-Glc), an integral component of the bacterial phosphotransferase (PTS) system. Key enzyme in the regulation of glycerol uptake and metabolism. Catalyzes the phosphorylation of glycerol to yield sn-glycerol 3-phosphate. The sequence is that of Glycerol kinase from Salmonella heidelberg (strain SL476).